A 459-amino-acid chain; its full sequence is Cysteine--tRNA ligase (459 aa).

A Zn(2+)-binding site is contributed by cysteine 29. Residues 31–41 (PTVYDRAHIGN) carry the 'HIGH' region motif. Zn(2+) is bound by residues cysteine 209, histidine 234, and glutamate 238. Positions 267–271 (KMSKS) match the 'KMSKS' region motif. Lysine 270 is a binding site for ATP.

The protein belongs to the class-I aminoacyl-tRNA synthetase family. Monomer. It depends on Zn(2+) as a cofactor.

It is found in the cytoplasm. It catalyses the reaction tRNA(Cys) + L-cysteine + ATP = L-cysteinyl-tRNA(Cys) + AMP + diphosphate. The protein is Cysteine--tRNA ligase of Rhodospirillum rubrum (strain ATCC 11170 / ATH 1.1.1 / DSM 467 / LMG 4362 / NCIMB 8255 / S1).